A 747-amino-acid chain; its full sequence is Pyrin (747 aa).

Residues 1–92 (MANTRVDHLL…AEELHKATGP (92 aa)) enclose the Pyrin domain. The segment at 89-181 (ATGPEHLTEE…GARSAAPLYR (93 aa)) is disordered. The segment covering 122–135 (PGEDEAQQNDDESD) has biased composition (acidic residues). The Zn(2+) site is built by Cys-442, His-445, Cys-465, and His-471. A B box-type zinc finger spans residues 442 to 479 (CPRHMKQVQLLFCEDHREPICLICRLSQEHQGHRVRPI). Positions 479 to 508 (IEEAALQYKEQIRKQLERLREMRGYVEEHK) form a coiled coil. Residues 487–645 (KEQIRKQLER…RFSEMLGSEM (159 aa)) are required for homotrimerization and induction of pyroptosomes. Residues 698–720 (EPQDYLHPSSAQDTPELHEIHSQ) form a disordered region.

In terms of assembly, homotrimer. Interacts (via the B box-type zinc finger) with PSTPIP1. Interacts (via the B30.2/SPRY domain) with several components of the inflammasome complex, including CASP1 p20 and p10 subunits, CASP5, PYCARD, NLRP1, NLRP2 and NLRP3, as well as with unprocessed IL1B; this interaction may lead to autophagic degradation of these proteins. Component of the AIM2 PANoptosome complex, a multiprotein complex that drives inflammatory cell death (PANoptosis). Interacts with NFKBIA and RELA. Interacts weakly with VASP and ACTR3. Interacts with active ULK1 (phosphorylated on 'Ser-317') and BECN1 simultaneously. Also interacts with ATG16L1 (via WD repeats), and with ATG8 family members, including GABARAP, GABARAPL1 and, to a lesser extent, GABARAPL2, MAP1LC3A/LC3A and MAP1LC3C/LC3C. Interacts with TRIM21. Interacts with YWHAB, YWHAE, YWHAG, YWHAH, YWHAQ and YWHAZ; the interaction is required for the down-regulation of pyrin pro-inflammatory activity. In terms of processing, degraded along with the delivery of its substrates to autolysosomal compartments (at protein level). As to expression, expressed in spleen and, to a lesser degree in the lung. Not expressed in thymus, testis, ovary, heart, brain, liver, kidney and muscle.

The protein resides in the cytoplasm. It is found in the cytoskeleton. The protein localises to the cell projection. It localises to the ruffle. Its subcellular location is the lamellipodium. The protein resides in the cytoplasmic vesicle. It is found in the autophagosome. The protein localises to the nucleus. Its function is as follows. Involved in the regulation of innate immunity and the inflammatory response in response to IFNG/IFN-gamma. Organizes autophagic machinery by serving as a platform for the assembly of ULK1, Beclin 1/BECN1, ATG16L1, and ATG8 family members and recognizes specific autophagy targets, thus coordinating target recognition with assembly of the autophagic apparatus and initiation of autophagy. Acts as an autophagy receptor for the degradation of several inflammasome components, including CASP1, NLRP1 and NLRP3, hence preventing excessive IL1B- and IL18-mediated inflammation. However, it can also have a positive effect in the inflammatory pathway, acting as an innate immune sensor that triggers PYCARD/ASC specks formation, caspase-1 activation, and IL1B and IL18 production. Together with AIM2, also acts as a mediator of pyroptosis, necroptosis and apoptosis (PANoptosis), an integral part of host defense against pathogens, in response to bacterial infection. It is required for PSTPIP1-induced PYCARD/ASC oligomerization and inflammasome formation. Recruits PSTPIP1 to inflammasomes, and is required for PSTPIP1 oligomerization. This Rattus norvegicus (Rat) protein is Pyrin.